Here is a 154-residue protein sequence, read N- to C-terminus: Ribosome maturation factor RimP (154 aa).

The protein belongs to the RimP family.

Its subcellular location is the cytoplasm. In terms of biological role, required for maturation of 30S ribosomal subunits. The chain is Ribosome maturation factor RimP from Acetivibrio thermocellus (strain ATCC 27405 / DSM 1237 / JCM 9322 / NBRC 103400 / NCIMB 10682 / NRRL B-4536 / VPI 7372) (Clostridium thermocellum).